The primary structure comprises 598 residues: tRNA(Met) cytidine acetyltransferase TmcA (598 aa).

Residues Gln-141, 163–172 (GRGKSTLAGK), and Arg-288 contribute to the ATP site. Residues 332 to 490 (TDLRRLFDAD…HSAMMLYPLS (159 aa)) form the N-acetyltransferase domain. Residues 411–413 (IAV), 418–424 (QNQGIGS), and Arg-462 each bind acetyl-CoA.

This sequence belongs to the RNA cytidine acetyltransferase family. TmcA subfamily.

Its subcellular location is the cytoplasm. It carries out the reaction cytidine(34) in elongator tRNA(Met) + acetyl-CoA + ATP + H2O = N(4)-acetylcytidine(34) in elongator tRNA(Met) + ADP + phosphate + CoA + H(+). Its function is as follows. Catalyzes the formation of N(4)-acetylcytidine (ac(4)C) at the wobble position of tRNA(Met), by using acetyl-CoA as an acetyl donor and ATP (or GTP). The sequence is that of tRNA(Met) cytidine acetyltransferase TmcA from Haemophilus ducreyi (strain 35000HP / ATCC 700724).